Here is a 481-residue protein sequence, read N- to C-terminus: Cobyric acid synthase (481 aa).

The GATase cobBQ-type domain maps to Gly249–Phe436. Cys331 acts as the Nucleophile in catalysis. His428 is a catalytic residue.

Belongs to the CobB/CobQ family. CobQ subfamily.

It participates in cofactor biosynthesis; adenosylcobalamin biosynthesis. Its function is as follows. Catalyzes amidations at positions B, D, E, and G on adenosylcobyrinic A,C-diamide. NH(2) groups are provided by glutamine, and one molecule of ATP is hydrogenolyzed for each amidation. This Jannaschia sp. (strain CCS1) protein is Cobyric acid synthase.